Reading from the N-terminus, the 458-residue chain is Exodeoxyribonuclease 7 large subunit (458 aa).

The protein belongs to the XseA family. As to quaternary structure, heterooligomer composed of large and small subunits.

It is found in the cytoplasm. The catalysed reaction is Exonucleolytic cleavage in either 5'- to 3'- or 3'- to 5'-direction to yield nucleoside 5'-phosphates.. Functionally, bidirectionally degrades single-stranded DNA into large acid-insoluble oligonucleotides, which are then degraded further into small acid-soluble oligonucleotides. The sequence is that of Exodeoxyribonuclease 7 large subunit from Serratia proteamaculans (strain 568).